A 307-amino-acid polypeptide reads, in one-letter code: CRISPR-associated endonuclease Cas1 2 (307 aa).

The Mn(2+) site is built by Glu142, His206, and Glu221.

This sequence belongs to the CRISPR-associated endonuclease Cas1 family. Homodimer, forms a heterotetramer with a Cas2 homodimer. Forms oligomers, probably binds nucleic acids as a homodimer. It depends on Mg(2+) as a cofactor. Requires Mn(2+) as cofactor.

In terms of biological role, CRISPR (clustered regularly interspaced short palindromic repeat), is an adaptive immune system that provides protection against mobile genetic elements (viruses, transposable elements and conjugative plasmids). CRISPR clusters contain spacers, sequences complementary to antecedent mobile elements, and target invading nucleic acids. CRISPR clusters are transcribed and processed into CRISPR RNA (crRNA). Acts as a dsDNA endonuclease. Involved in the integration of spacer DNA into the CRISPR cassette. Its function is as follows. In vitro catalyzes a concerted transesterification reaction on branched DNA, as would be expected during integration of protospacers into the CRISPR leader sequence; Cas2 is not required in vitro. This reaction requires a 3'-OH group at the branch point. Binds ss- and dsDNA and ss- and dsRNA with approximately equal affinity. May be able to anneal complementary DNA strands. This is CRISPR-associated endonuclease Cas1 2 from Saccharolobus solfataricus (strain ATCC 35092 / DSM 1617 / JCM 11322 / P2) (Sulfolobus solfataricus).